The primary structure comprises 320 residues: ATP-dependent 6-phosphofructokinase (320 aa).

ATP is bound at residue Gly12. Residues 22–26 (RGVVR) and 55–60 (RYSVSD) contribute to the ADP site. Residues 73 to 74 (RF) and 103 to 106 (GDGS) each bind ATP. Asp104 is a Mg(2+) binding site. 126-128 (TID) provides a ligand contact to substrate. Catalysis depends on Asp128, which acts as the Proton acceptor. Arg155 is a binding site for ADP. Substrate is bound by residues Arg163 and 170-172 (MGR). ADP is bound by residues 186 to 188 (GCE), Lys212, and 214 to 216 (KKH). Substrate is bound by residues Glu223, Arg244, and 250-253 (HIQR).

It belongs to the phosphofructokinase type A (PFKA) family. ATP-dependent PFK group I subfamily. Prokaryotic clade 'B1' sub-subfamily. Homotetramer. It depends on Mg(2+) as a cofactor.

It is found in the cytoplasm. It carries out the reaction beta-D-fructose 6-phosphate + ATP = beta-D-fructose 1,6-bisphosphate + ADP + H(+). It functions in the pathway carbohydrate degradation; glycolysis; D-glyceraldehyde 3-phosphate and glycerone phosphate from D-glucose: step 3/4. Its activity is regulated as follows. Allosterically activated by ADP and other diphosphonucleosides, and allosterically inhibited by phosphoenolpyruvate. Catalyzes the phosphorylation of D-fructose 6-phosphate to fructose 1,6-bisphosphate by ATP, the first committing step of glycolysis. The protein is ATP-dependent 6-phosphofructokinase of Buchnera aphidicola subsp. Baizongia pistaciae (strain Bp).